A 176-amino-acid chain; its full sequence is RNA pyrophosphohydrolase (176 aa).

The 144-residue stretch at 6–149 (GYRPNVGIVI…KRDVYRRVMK (144 aa)) folds into the Nudix hydrolase domain. A Nudix box motif is present at residues 38-59 (GGINPGESAEQAMYRELFEEVG).

It belongs to the Nudix hydrolase family. RppH subfamily. It depends on a divalent metal cation as a cofactor.

In terms of biological role, accelerates the degradation of transcripts by removing pyrophosphate from the 5'-end of triphosphorylated RNA, leading to a more labile monophosphorylated state that can stimulate subsequent ribonuclease cleavage. This is RNA pyrophosphohydrolase from Shigella dysenteriae serotype 1 (strain Sd197).